A 503-amino-acid chain; its full sequence is Cytochrome P450 11B2, mitochondrial (503 aa).

The N-terminal 24 residues, 1 to 24 (MALRAKAEVCVAAPWLSLQRARAL), are a transit peptide targeting the mitochondrion. Phe-381 is a binding site for 21-hydroxyprogesterone. Cys-450 is a binding site for heme.

Belongs to the cytochrome P450 family. It depends on heme as a cofactor. As to expression, expressed sporadically in the zona glomerulosa (zG) of the adrenal cortex (conventional zonation), as well as in aldosterone-producing cell clusters (APCCs) composed of morphological zG cells in contact with the capsule (variegated zonation).

The protein resides in the mitochondrion inner membrane. It catalyses the reaction a steroid + 2 reduced [adrenodoxin] + O2 + 2 H(+) = an 11beta-hydroxysteroid + 2 oxidized [adrenodoxin] + H2O. The catalysed reaction is 21-hydroxyprogesterone + 2 reduced [adrenodoxin] + O2 + 2 H(+) = corticosterone + 2 oxidized [adrenodoxin] + H2O. The enzyme catalyses corticosterone + 2 reduced [adrenodoxin] + O2 + 2 H(+) = 18-hydroxycorticosterone + 2 oxidized [adrenodoxin] + H2O. It carries out the reaction 18-hydroxycorticosterone + 2 reduced [adrenodoxin] + O2 + 2 H(+) = aldosterone + 2 oxidized [adrenodoxin] + 2 H2O. It catalyses the reaction 11-deoxycortisol + 2 reduced [adrenodoxin] + O2 + 2 H(+) = cortisol + 2 oxidized [adrenodoxin] + H2O. The catalysed reaction is 21-hydroxyprogesterone + 2 reduced [adrenodoxin] + O2 + 2 H(+) = 18-hydroxy-11-deoxycorticosterone + 2 oxidized [adrenodoxin] + H2O. The enzyme catalyses cortisol + 2 reduced [adrenodoxin] + O2 + 2 H(+) = 18-hydroxycortisol + 2 oxidized [adrenodoxin] + H2O. It carries out the reaction 18-hydroxycortisol + 2 reduced [adrenodoxin] + O2 + 2 H(+) = 18-oxocortisol + 2 oxidized [adrenodoxin] + 2 H2O. It participates in steroid biosynthesis. Functionally, a cytochrome P450 monooxygenase that catalyzes the biosynthesis of aldosterone, the main mineralocorticoid in the human body responsible for salt and water homeostasis, thus involved in blood pressure regulation, arterial hypertension, and the development of heart failure. Catalyzes three sequential oxidative reactions of 11-deoxycorticosterone (21-hydroxyprogesterone), namely 11-beta hydroxylation, followed by two successive oxidations at C18 yielding 18-hydroxy and then 18-oxo intermediates (that would not leave the enzyme active site during the consecutive hydroxylation reactions), ending with the formation of aldosterone. Can also produce 18-hydroxycortisol and 18-oxocortisol, derived from successive oxidations of cortisol at C18, normally found at very low levels, but significantly increased in primary aldosteronism, the most common form of secondary hypertension. Mechanistically, uses molecular oxygen inserting one oxygen atom into a substrate and reducing the second into a water molecule. Two electrons are provided by NADPH via a two-protein mitochondrial transfer system comprising flavoprotein FDXR (adrenodoxin/ferredoxin reductase) and nonheme iron-sulfur protein FDX1 or FDX2 (adrenodoxin/ferredoxin). Could also be involved in the androgen metabolic pathway. The protein is Cytochrome P450 11B2, mitochondrial of Homo sapiens (Human).